The sequence spans 514 residues: Putative thymidine phosphorylase (514 aa).

The protein belongs to the thymidine/pyrimidine-nucleoside phosphorylase family. Type 2 subfamily.

The catalysed reaction is thymidine + phosphate = 2-deoxy-alpha-D-ribose 1-phosphate + thymine. This Sphingopyxis alaskensis (strain DSM 13593 / LMG 18877 / RB2256) (Sphingomonas alaskensis) protein is Putative thymidine phosphorylase.